The primary structure comprises 172 residues: Type VI secretion system sheath protein TssB1 (172 aa).

As to quaternary structure, forms a heterodimer with TssC1. Heterodimers assemble to form the sheath of the T6SS machinery. Interacts with TagJ. Interacts with TssA1.

Its function is as follows. Core component of the H1 type VI (H1-T6SS) secretion system that plays a role in the release of toxins targeting both eukaryotic and prokaryotic species. Forms the sheath of the structure by assembling into tubules together with TssC1 resulting in the stacking of cogwheel-like structures showing predominantly a 12-fold symmetry. The sheath contracts to provide the energy needed for effector delivery. The polypeptide is Type VI secretion system sheath protein TssB1 (Pseudomonas aeruginosa (strain ATCC 15692 / DSM 22644 / CIP 104116 / JCM 14847 / LMG 12228 / 1C / PRS 101 / PAO1)).